A 183-amino-acid chain; its full sequence is Large ribosomal subunit protein uL5 (183 aa).

The protein belongs to the universal ribosomal protein uL5 family. As to quaternary structure, part of the 50S ribosomal subunit; part of the 5S rRNA/L5/L18/L25 subcomplex. Contacts the 5S rRNA and the P site tRNA. Forms a bridge to the 30S subunit in the 70S ribosome.

Functionally, this is one of the proteins that bind and probably mediate the attachment of the 5S RNA into the large ribosomal subunit, where it forms part of the central protuberance. In the 70S ribosome it contacts protein S13 of the 30S subunit (bridge B1b), connecting the 2 subunits; this bridge is implicated in subunit movement. Contacts the P site tRNA; the 5S rRNA and some of its associated proteins might help stabilize positioning of ribosome-bound tRNAs. In Corynebacterium aurimucosum (strain ATCC 700975 / DSM 44827 / CIP 107346 / CN-1) (Corynebacterium nigricans), this protein is Large ribosomal subunit protein uL5.